We begin with the raw amino-acid sequence, 156 residues long: SCP2 sterol-binding domain-containing protein 1 (156 aa).

Residues 44 to 156 enclose the SCP2 domain; that stretch reads SFPVFQDIRL…ERVFKDWAKF (113 aa).

The polypeptide is SCP2 sterol-binding domain-containing protein 1 (SCP2D1) (Homo sapiens (Human)).